The sequence spans 301 residues: Methionyl-tRNA formyltransferase (301 aa).

109–112 (SILP) provides a ligand contact to (6S)-5,6,7,8-tetrahydrofolate.

It belongs to the Fmt family.

The enzyme catalyses L-methionyl-tRNA(fMet) + (6R)-10-formyltetrahydrofolate = N-formyl-L-methionyl-tRNA(fMet) + (6S)-5,6,7,8-tetrahydrofolate + H(+). Functionally, attaches a formyl group to the free amino group of methionyl-tRNA(fMet). The formyl group appears to play a dual role in the initiator identity of N-formylmethionyl-tRNA by promoting its recognition by IF2 and preventing the misappropriation of this tRNA by the elongation apparatus. This chain is Methionyl-tRNA formyltransferase, found in Campylobacter curvus (strain 525.92).